Reading from the N-terminus, the 99-residue chain is MIVNALSKAIMAETLCDELKLNKPVAKEMVENFFEELRHALENGQHVKLSGFGNFTLRDKPQRPGRNPKTGEEIPVEARRVVTFKPGLKLKTKIEKIGK.

A disordered region spans residues Phe-52–Glu-73.

It belongs to the bacterial histone-like protein family. As to quaternary structure, heterodimer of an alpha and a beta chain.

Functionally, this protein is one of the two subunits of integration host factor, a specific DNA-binding protein that functions in genetic recombination as well as in transcriptional and translational control. This chain is Integration host factor subunit alpha, found in Legionella pneumophila subsp. pneumophila (strain Philadelphia 1 / ATCC 33152 / DSM 7513).